The primary structure comprises 652 residues: Acetyl-coenzyme A synthetase (652 aa).

Residues 193 to 196 and Thr-312 each bind CoA; that span reads RRGK. ATP-binding positions include 388–390, 412–417, Asp-501, and Arg-516; these read GEP and DTWWQT. Position 524 (Ser-524) interacts with CoA. The Mg(2+) site is built by Val-538, His-540, and Val-543. Lys-611 is modified (N6-acetyllysine).

This sequence belongs to the ATP-dependent AMP-binding enzyme family. Requires Mg(2+) as cofactor. Acetylated. Deacetylation by the SIR2-homolog deacetylase activates the enzyme.

It carries out the reaction acetate + ATP + CoA = acetyl-CoA + AMP + diphosphate. Functionally, catalyzes the conversion of acetate into acetyl-CoA (AcCoA), an essential intermediate at the junction of anabolic and catabolic pathways. AcsA undergoes a two-step reaction. In the first half reaction, AcsA combines acetate with ATP to form acetyl-adenylate (AcAMP) intermediate. In the second half reaction, it can then transfer the acetyl group from AcAMP to the sulfhydryl group of CoA, forming the product AcCoA. This is Acetyl-coenzyme A synthetase from Streptomyces avermitilis (strain ATCC 31267 / DSM 46492 / JCM 5070 / NBRC 14893 / NCIMB 12804 / NRRL 8165 / MA-4680).